Reading from the N-terminus, the 76-residue chain is Putative cation transport regulator ChaB (76 aa).

Belongs to the ChaB family. In terms of assembly, monomer.

Functionally, might be a regulator of the sodium-potassium/proton antiporter ChaA. The protein is Putative cation transport regulator ChaB of Escherichia coli O157:H7.